The chain runs to 557 residues: Potassium-transporting ATPase potassium-binding subunit (557 aa).

The next 10 membrane-spanning stretches (helical) occupy residues 4 to 24 (LGAG…VHVP), 61 to 81 (TYAL…YAFL), 131 to 151 (GLTV…VALV), 174 to 194 (LRVL…TGVV), 253 to 273 (LEVF…GTLV), 280 to 300 (LAVL…TTWA), 375 to 395 (GLYG…LMVG), 412 to 432 (CAAL…AVAL), 483 to 503 (LAIW…AGAF), and 528 to 548 (LAVV…LGPI).

This sequence belongs to the KdpA family. The system is composed of three essential subunits: KdpA, KdpB and KdpC.

It is found in the cell membrane. In terms of biological role, part of the high-affinity ATP-driven potassium transport (or Kdp) system, which catalyzes the hydrolysis of ATP coupled with the electrogenic transport of potassium into the cytoplasm. This subunit binds the extracellular potassium ions and delivers the ions to the membrane domain of KdpB through an intramembrane tunnel. This Kineococcus radiotolerans (strain ATCC BAA-149 / DSM 14245 / SRS30216) protein is Potassium-transporting ATPase potassium-binding subunit.